Consider the following 610-residue polypeptide: GATOR complex protein NPRL3 (610 aa).

Residue S437 is modified to Phosphoserine. The interval 474–501 (REASEDHSSLASDNIAVQPSSSHKSNFS) is disordered. Polar residues predominate over residues 482–501 (SLASDNIAVQPSSSHKSNFS).

Belongs to the NPR3 family. In terms of assembly, component of the GATOR complex consisting of mio, Nup44A/Seh1, Im11, Nplr3, Nplr2, Wdr24, Wdr59 and Sec13. Within the GATOR complex, probable component of the GATOR1 subcomplex which is likely composed of Iml1, Nplr2 and Nplr3. Interacts with Nprl2.

It localises to the cytoplasm. Its subcellular location is the lysosome. Functionally, an essential component of the GATOR subcomplex GATOR1 which functions as an inhibitor of the amino acid-sensing branch of the TORC1 signaling pathway. The two GATOR subcomplexes, GATOR1 and GATOR2, regulate the TORC1 pathway in order to mediate metabolic homeostasis, female gametogenesis and the response to amino acid limitation and complete starvation. The function of GATOR1 in negatively regulating the TORC1 pathway is essential for maintaining baseline levels of TORC1 activity under nutrient rich conditions, and for promoting survival during amino acid or complete starvation by inhibiting TORC1-dependent cell growth and promoting catabolic metabolism and autophagy. In addition, this inhibition of TORC1 is necessary to maintain female fertility under normal conditions and during periods of nutrient stress. GATOR1 and GATOR2 act at different stages of oogenesis to regulate TORC1 in order to control meiotic entry and promote oocyte growth and development. After exactly four mitotic cyst divisions, the GATOR1 complex members (Iml1, Nprl2 and Nprl3) down-regulate TORC1 to slow cellular metabolism and promote the mitotic/meiotic transition. At later stages of oogenesis, the mio and Nup44A components of the GATOR2 complex inhibit GATOR1 and thus activate TORC1 to promote meiotic progression, and drive oocyte growth and development. The chain is GATOR complex protein NPRL3 from Drosophila melanogaster (Fruit fly).